The chain runs to 418 residues: Gamma-glutamyl phosphate reductase (418 aa).

The protein belongs to the gamma-glutamyl phosphate reductase family.

Its subcellular location is the cytoplasm. It catalyses the reaction L-glutamate 5-semialdehyde + phosphate + NADP(+) = L-glutamyl 5-phosphate + NADPH + H(+). It functions in the pathway amino-acid biosynthesis; L-proline biosynthesis; L-glutamate 5-semialdehyde from L-glutamate: step 2/2. Its function is as follows. Catalyzes the NADPH-dependent reduction of L-glutamate 5-phosphate into L-glutamate 5-semialdehyde and phosphate. The product spontaneously undergoes cyclization to form 1-pyrroline-5-carboxylate. This Geobacter metallireducens (strain ATCC 53774 / DSM 7210 / GS-15) protein is Gamma-glutamyl phosphate reductase.